The chain runs to 279 residues: DegV domain-containing protein spr1019 (279 aa).

The DegV domain maps to 4 to 277; the sequence is IKIVTDSSVT…ENAWAILIRY (274 aa). Residues Thr62 and Ser94 each contribute to the hexadecanoate site.

Functionally, may bind long-chain fatty acids, such as palmitate, and may play a role in lipid transport or fatty acid metabolism. This Streptococcus pneumoniae (strain ATCC BAA-255 / R6) protein is DegV domain-containing protein spr1019.